The primary structure comprises 103 residues: Large ribosomal subunit protein bL21 (103 aa).

This sequence belongs to the bacterial ribosomal protein bL21 family. Part of the 50S ribosomal subunit. Contacts protein L20.

Its function is as follows. This protein binds to 23S rRNA in the presence of protein L20. This Treponema denticola (strain ATCC 35405 / DSM 14222 / CIP 103919 / JCM 8153 / KCTC 15104) protein is Large ribosomal subunit protein bL21.